The sequence spans 240 residues: 1-(5-phosphoribosyl)-5-[(5-phosphoribosylamino)methylideneamino] imidazole-4-carboxamide isomerase (240 aa).

The active-site Proton acceptor is the D8. D129 acts as the Proton donor in catalysis.

This sequence belongs to the HisA/HisF family.

The protein resides in the cytoplasm. It catalyses the reaction 1-(5-phospho-beta-D-ribosyl)-5-[(5-phospho-beta-D-ribosylamino)methylideneamino]imidazole-4-carboxamide = 5-[(5-phospho-1-deoxy-D-ribulos-1-ylimino)methylamino]-1-(5-phospho-beta-D-ribosyl)imidazole-4-carboxamide. It functions in the pathway amino-acid biosynthesis; L-histidine biosynthesis; L-histidine from 5-phospho-alpha-D-ribose 1-diphosphate: step 4/9. The polypeptide is 1-(5-phosphoribosyl)-5-[(5-phosphoribosylamino)methylideneamino] imidazole-4-carboxamide isomerase (Clostridioides difficile (strain 630) (Peptoclostridium difficile)).